Consider the following 195-residue polypeptide: SAGA-associated factor 11 homolog (195 aa).

The disordered stretch occupies residues 1–22; that stretch reads MSAANMPTTTGAQGSGNQVPRT. The SGF11-type zinc-finger motif lies at 105-126; it reads CTCPNCDRLVAAARFAPHLEKC. The disordered stretch occupies residues 140 to 195; that stretch reads RLATKEGATSAHLHSSGNTGGTDDEDDVDWSSDKRRKKSNQNSRNNGSKKNNGKTF. A Phosphoserine modification is found at serine 171. The span at 179–195 shows a compositional bias: low complexity; the sequence is NQNSRNNGSKKNNGKTF.

This sequence belongs to the SGF11 family. In terms of assembly, component of some SAGA transcription coactivator-HAT complexes, at least composed of Ada2b, not/nonstop, Pcaf/Gcn5, Sgf11 and Spt3. Within the SAGA complex, Sgf11, e(y)2, and not/nonstop form an additional subcomplex of SAGA called the DUB module (deubiquitination module). Interacts directly with not/nonstop. Interacts with the AMEX complex component xmas-2. Interacts with Cbp80; important for promoter recruitment of Sgf11 that is not associated with the DUB module.

It localises to the nucleus. Its subcellular location is the nucleoplasm. It is found in the cytoplasm. Functionally, component of the transcription regulatory histone acetylation (HAT) complex SAGA, a multiprotein complex that activates transcription by remodeling chromatin and mediating histone acetylation and deubiquitination. Within the SAGA complex, participates in a subcomplex that specifically deubiquitinates histone H2B. The SAGA complex is recruited to specific gene promoters by activators, where it is required for transcription. Required for nuclear receptor-mediated transactivation. Binds independently on SAGA to promoters in an RNA-dependent manner. Binds to mRNA and is essential for total mRNA export from the nucleus. Required to counteract heterochromatin silencing. Controls the development of neuronal connectivity in visual system by being required for accurate axon targeting in the optic lobe. Required for expression of ecdysone-induced genes such as br/broad. The protein is SAGA-associated factor 11 homolog of Drosophila sechellia (Fruit fly).